A 386-amino-acid chain; its full sequence is Succinate--CoA ligase [ADP-forming] subunit beta (386 aa).

The ATP-grasp domain occupies Lys9–Glu244. ATP contacts are provided by residues Lys46, Gly53–Gly55, Glu99, Ala102, and Glu107. Residues Asn199 and Asp213 each coordinate Mg(2+). Substrate contacts are provided by residues Asn264 and Gly321–Met323.

The protein belongs to the succinate/malate CoA ligase beta subunit family. Heterotetramer of two alpha and two beta subunits. It depends on Mg(2+) as a cofactor.

The enzyme catalyses succinate + ATP + CoA = succinyl-CoA + ADP + phosphate. It catalyses the reaction GTP + succinate + CoA = succinyl-CoA + GDP + phosphate. It functions in the pathway carbohydrate metabolism; tricarboxylic acid cycle; succinate from succinyl-CoA (ligase route): step 1/1. In terms of biological role, succinyl-CoA synthetase functions in the citric acid cycle (TCA), coupling the hydrolysis of succinyl-CoA to the synthesis of either ATP or GTP and thus represents the only step of substrate-level phosphorylation in the TCA. The beta subunit provides nucleotide specificity of the enzyme and binds the substrate succinate, while the binding sites for coenzyme A and phosphate are found in the alpha subunit. This is Succinate--CoA ligase [ADP-forming] subunit beta from Bordetella avium (strain 197N).